Consider the following 286-residue polypeptide: MVAVIIKGNEVAEKKRAQLKEEVVKLKEQGIVPGLAVILVGEDPASRSYVKGKEKGCEQVGIYSELIEFPETITEERLLAEIDRLNGDDRINGILVQLPLPKHIEEKAIIERISPEKDVDGFHPISVGRMMTGQDTFLPCTPHGIVELVKETNLDISGKHVVVIGRSNIVGKPVGQLFLNENATVTYCHSKTQNMKELTKLADILIVAVGRPKMVTADYIKEGAVVIDVGVNRLETGKLCGDVDFDNVLDVASYITPVPKGVGPMTITMLLHNTVESAKRAGVVCK.

NADP(+) is bound by residues 165–167 (GRS), S190, and V231.

This sequence belongs to the tetrahydrofolate dehydrogenase/cyclohydrolase family. As to quaternary structure, homodimer.

It catalyses the reaction (6R)-5,10-methylene-5,6,7,8-tetrahydrofolate + NADP(+) = (6R)-5,10-methenyltetrahydrofolate + NADPH. It carries out the reaction (6R)-5,10-methenyltetrahydrofolate + H2O = (6R)-10-formyltetrahydrofolate + H(+). It functions in the pathway one-carbon metabolism; tetrahydrofolate interconversion. Catalyzes the oxidation of 5,10-methylenetetrahydrofolate to 5,10-methenyltetrahydrofolate and then the hydrolysis of 5,10-methenyltetrahydrofolate to 10-formyltetrahydrofolate. The chain is Bifunctional protein FolD from Bacillus anthracis (strain A0248).